A 177-amino-acid chain; its full sequence is PRELI domain-containing protein 2 (177 aa).

Residues 1-175 (MGVTVDVHQV…LLKEQCGSPL (175 aa)) enclose the PRELI/MSF1 domain.

The protein is PRELI domain-containing protein 2 (Prelid2) of Mus musculus (Mouse).